A 389-amino-acid polypeptide reads, in one-letter code: uncharacterized protein (389 aa).

Belongs to the mimivirus L17x/L18x family.

This is an uncharacterized protein from Acanthamoeba polyphaga mimivirus (APMV).